The following is a 94-amino-acid chain: Acylphosphatase (94 aa).

One can recognise an Acylphosphatase-like domain in the interval 7–94; the sequence is AVQARVYGRV…TAPGDFRIVA (88 aa). Catalysis depends on residues arginine 22 and asparagine 40.

This sequence belongs to the acylphosphatase family.

The catalysed reaction is an acyl phosphate + H2O = a carboxylate + phosphate + H(+). In Mesorhizobium japonicum (strain LMG 29417 / CECT 9101 / MAFF 303099) (Mesorhizobium loti (strain MAFF 303099)), this protein is Acylphosphatase (acyP).